Reading from the N-terminus, the 115-residue chain is Photosystem II reaction center Psb28 protein (115 aa).

It belongs to the Psb28 family. As to quaternary structure, part of the photosystem II complex.

The protein resides in the plastid. It localises to the chloroplast thylakoid membrane. The chain is Photosystem II reaction center Psb28 protein from Phaeodactylum tricornutum (strain CCAP 1055/1).